Reading from the N-terminus, the 350-residue chain is Holliday junction branch migration complex subunit RuvB (350 aa).

The disordered stretch occupies residues methionine 1–aspartate 20. The segment at alanine 4–tyrosine 184 is large ATPase domain (RuvB-L). Residues isoleucine 23, arginine 24, glycine 65, lysine 68, threonine 69, threonine 70, glutamate 131–phenylalanine 133, arginine 174, tyrosine 184, and arginine 221 each bind ATP. Threonine 69 is a Mg(2+) binding site. The segment at glycine 185 to aspartate 255 is small ATPAse domain (RuvB-S). The segment at glutamate 258–glutamate 350 is head domain (RuvB-H). 3 residues coordinate DNA: arginine 294, arginine 313, and arginine 318.

The protein belongs to the RuvB family. In terms of assembly, homohexamer. Forms an RuvA(8)-RuvB(12)-Holliday junction (HJ) complex. HJ DNA is sandwiched between 2 RuvA tetramers; dsDNA enters through RuvA and exits via RuvB. An RuvB hexamer assembles on each DNA strand where it exits the tetramer. Each RuvB hexamer is contacted by two RuvA subunits (via domain III) on 2 adjacent RuvB subunits; this complex drives branch migration. In the full resolvosome a probable DNA-RuvA(4)-RuvB(12)-RuvC(2) complex forms which resolves the HJ.

It is found in the cytoplasm. The catalysed reaction is ATP + H2O = ADP + phosphate + H(+). The RuvA-RuvB-RuvC complex processes Holliday junction (HJ) DNA during genetic recombination and DNA repair, while the RuvA-RuvB complex plays an important role in the rescue of blocked DNA replication forks via replication fork reversal (RFR). RuvA specifically binds to HJ cruciform DNA, conferring on it an open structure. The RuvB hexamer acts as an ATP-dependent pump, pulling dsDNA into and through the RuvAB complex. RuvB forms 2 homohexamers on either side of HJ DNA bound by 1 or 2 RuvA tetramers; 4 subunits per hexamer contact DNA at a time. Coordinated motions by a converter formed by DNA-disengaged RuvB subunits stimulates ATP hydrolysis and nucleotide exchange. Immobilization of the converter enables RuvB to convert the ATP-contained energy into a lever motion, pulling 2 nucleotides of DNA out of the RuvA tetramer per ATP hydrolyzed, thus driving DNA branch migration. The RuvB motors rotate together with the DNA substrate, which together with the progressing nucleotide cycle form the mechanistic basis for DNA recombination by continuous HJ branch migration. Branch migration allows RuvC to scan DNA until it finds its consensus sequence, where it cleaves and resolves cruciform DNA. The sequence is that of Holliday junction branch migration complex subunit RuvB from Ectopseudomonas mendocina (strain ymp) (Pseudomonas mendocina).